Consider the following 303-residue polypeptide: UDP-3-O-acyl-N-acetylglucosamine deacetylase (303 aa).

Residues H78, H237, and D241 each contribute to the Zn(2+) site. The active-site Proton donor is the H264.

This sequence belongs to the LpxC family. Zn(2+) serves as cofactor.

The catalysed reaction is a UDP-3-O-[(3R)-3-hydroxyacyl]-N-acetyl-alpha-D-glucosamine + H2O = a UDP-3-O-[(3R)-3-hydroxyacyl]-alpha-D-glucosamine + acetate. It participates in glycolipid biosynthesis; lipid IV(A) biosynthesis; lipid IV(A) from (3R)-3-hydroxytetradecanoyl-[acyl-carrier-protein] and UDP-N-acetyl-alpha-D-glucosamine: step 2/6. Its function is as follows. Catalyzes the hydrolysis of UDP-3-O-myristoyl-N-acetylglucosamine to form UDP-3-O-myristoylglucosamine and acetate, the committed step in lipid A biosynthesis. This Pseudomonas fluorescens (strain ATCC BAA-477 / NRRL B-23932 / Pf-5) protein is UDP-3-O-acyl-N-acetylglucosamine deacetylase.